The primary structure comprises 234 residues: Large ribosomal subunit protein uL1 (234 aa).

Belongs to the universal ribosomal protein uL1 family. In terms of assembly, part of the 50S ribosomal subunit.

Functionally, binds directly to 23S rRNA. The L1 stalk is quite mobile in the ribosome, and is involved in E site tRNA release. Its function is as follows. Protein L1 is also a translational repressor protein, it controls the translation of the L11 operon by binding to its mRNA. The protein is Large ribosomal subunit protein uL1 of Serratia marcescens.